A 450-amino-acid chain; its full sequence is Keratin, type I cytoskeletal 25 (450 aa).

Positions 1-23 (MSLRLSSASRRSCPRPTTGSLRL) are enriched in low complexity. The segment at 1–26 (MSLRLSSASRRSCPRPTTGSLRLSGG) is disordered. The segment at 1–78 (MSLRLSSASR…VNERGLLSGN (78 aa)) is head. Residues 79–114 (EKVTMQNLNDRLASYLDSVHALEEANADLEQKIKGW) form a coil 1A region. The IF rod domain occupies 79-394 (EKVTMQNLND…LLIGGDDGAC (316 aa)). Positions 115–136 (YEKFGPGSCRGLDHDYSRYFPI) are linker 1. The segment at 137-228 (IDDLKNQIIA…KNHKEEMQVL (92 aa)) is coil 1B. The tract at residues 229-251 (QCAAGGNVNVEMNAAPGVDLTVL) is linker 12. Residues 252 to 390 (LNNMRAEYEA…ETYCLLIGGD (139 aa)) form a coil 2 region. Residues 391-450 (DGACKSGGYKSKDYGSGNVGSQVKDSAKAIVVKKVLEEVDQRSKILTTRLRSLEEKSQSN) are tail. Ser442 bears the Phosphoserine mark.

It belongs to the intermediate filament family. Heterodimer of a type I and a type II keratin. Heterodimer with type II keratin KRT5 leading to the formation of keratin intermediate filament (KIF) network. Interacts with KRT6A to form filaments.

The protein resides in the cytoplasm. In terms of biological role, essential for the proper assembly of type I and type II keratin protein complexes and formation of keratin intermediate filaments in the inner root sheath (irs). Plays a role in the cytoskeleton organization. In Pan troglodytes (Chimpanzee), this protein is Keratin, type I cytoskeletal 25 (KRT25).